A 497-amino-acid polypeptide reads, in one-letter code: Probable cytosol aminopeptidase (497 aa).

Mn(2+) is bound by residues Lys267 and Asp272. The active site involves Lys279. The Mn(2+) site is built by Asp290, Asp349, and Glu351. Arg353 is an active-site residue.

Belongs to the peptidase M17 family. Mn(2+) is required as a cofactor.

Its subcellular location is the cytoplasm. It catalyses the reaction Release of an N-terminal amino acid, Xaa-|-Yaa-, in which Xaa is preferably Leu, but may be other amino acids including Pro although not Arg or Lys, and Yaa may be Pro. Amino acid amides and methyl esters are also readily hydrolyzed, but rates on arylamides are exceedingly low.. The enzyme catalyses Release of an N-terminal amino acid, preferentially leucine, but not glutamic or aspartic acids.. Its function is as follows. Presumably involved in the processing and regular turnover of intracellular proteins. Catalyzes the removal of unsubstituted N-terminal amino acids from various peptides. This Nitrosomonas eutropha (strain DSM 101675 / C91 / Nm57) protein is Probable cytosol aminopeptidase.